The sequence spans 428 residues: 3-phosphoshikimate 1-carboxyvinyltransferase (428 aa).

Residues Lys20, Ser21, and Arg25 each coordinate 3-phosphoshikimate. Lys20 serves as a coordination point for phosphoenolpyruvate. Residues Gly93 and Arg122 each coordinate phosphoenolpyruvate. 3-phosphoshikimate contacts are provided by Ser167, Gln169, Asp317, and Lys344. Gln169 contributes to the phosphoenolpyruvate binding site. The active-site Proton acceptor is the Asp317. Residues Arg348 and Arg390 each contribute to the phosphoenolpyruvate site.

The protein belongs to the EPSP synthase family. As to quaternary structure, monomer.

The protein localises to the cytoplasm. It catalyses the reaction 3-phosphoshikimate + phosphoenolpyruvate = 5-O-(1-carboxyvinyl)-3-phosphoshikimate + phosphate. It participates in metabolic intermediate biosynthesis; chorismate biosynthesis; chorismate from D-erythrose 4-phosphate and phosphoenolpyruvate: step 6/7. In terms of biological role, catalyzes the transfer of the enolpyruvyl moiety of phosphoenolpyruvate (PEP) to the 5-hydroxyl of shikimate-3-phosphate (S3P) to produce enolpyruvyl shikimate-3-phosphate and inorganic phosphate. This is 3-phosphoshikimate 1-carboxyvinyltransferase from Leptospira biflexa serovar Patoc (strain Patoc 1 / ATCC 23582 / Paris).